Reading from the N-terminus, the 132-residue chain is Fatty acid-binding protein 2 (132 aa).

Residue serine 2 is modified to N-acetylserine. Residues glutamine 40 and 128 to 130 (RYY) each bind hexadecanoate.

The protein belongs to the calycin superfamily. Fatty-acid binding protein (FABP) family. Monomer. In terms of tissue distribution, midgut.

Its subcellular location is the cytoplasm. In terms of biological role, binds fatty acids in a 1:1 molar ratio. This chain is Fatty acid-binding protein 2 (MFB2), found in Manduca sexta (Tobacco hawkmoth).